The following is a 299-amino-acid chain: MEFEQRIKAYRFVAYSAVAFSVVAVLSVCITLPMVHNYVHHVKRTMNQEVQFCRGSAKDIWTEVNELKSIQHANRTARQSGYDAGVNGGSASTGGCDACCLPGAAGPAGTPGKPGRPGKPGAPGLPGNPGHPPQQPCDPITPPPCQPCPQGPPGPPGPPGPSGDAGGNGNPGSPGQDGQPGAPGNKGPSGPNGNPGAPGAPGQPGQDAPSEPITPGAPGPQGTPGPQGPPGQPGQPGHDGQPGAPGPKGPNGNPGQPGADGNPGAPGQSGTPGGVGEKGICPKYCAIDGGVFFEDGTRR.

Residues 1–27 (MEFEQRIKAYRFVAYSAVAFSVVAVLS) form the signal peptide. Triple-helical region regions lie at residues 103 to 132 (GAAG…PGHP), 151 to 177 (GPPG…PGQD), 181 to 202 (GAPG…GAPG), and 216 to 278 (GAPG…VGEK). The tract at residues 107-278 (PAGTPGKPGR…SGTPGGVGEK (172 aa)) is disordered. Positions 129 to 161 (PGHPPQQPCDPITPPPCQPCPQGPPGPPGPPGP) are enriched in pro residues. The segment covering 163 to 172 (GDAGGNGNPG) has biased composition (gly residues). The segment covering 173–197 (SPGQDGQPGAPGNKGPSGPNGNPGA) has biased composition (low complexity). The segment covering 215-233 (PGAPGPQGTPGPQGPPGQP) has biased composition (pro residues). Low complexity predominate over residues 250–268 (PNGNPGQPGADGNPGAPGQ).

It belongs to the cuticular collagen family. In terms of assembly, collagen polypeptide chains are complexed within the cuticle by disulfide bonds and other types of covalent cross-links.

Functionally, nematode cuticles are composed largely of collagen-like proteins. The cuticle functions both as an exoskeleton and as a barrier to protect the worm from its environment. This Caenorhabditis elegans protein is Putative cuticle collagen 155 (col-155).